Reading from the N-terminus, the 698-residue chain is Probable xyloglucan glycosyltransferase 2 (698 aa).

A run of 2 helical transmembrane segments spans residues 124 to 144 and 190 to 210; these read GFLALSLLALAVELAAYWNGW and ILLFVIQSMDRLVLCLGCFWI. The active site involves Asp-272. Positions 331 and 333 each coordinate substrate. Asp-425 is a catalytic residue. Transmembrane regions (helical) follow at residues 503–523, 528–548, 653–668, and 673–693; these read LILPFYSFTLFCVILPLTMFV, LPVWVICYVPVCMSFLNILPS, LALSLLLLTAATRSLL, and IHFYFLLFQGVSFLFVGLDLI.

It belongs to the glycosyltransferase 2 family. Plant cellulose synthase-like C subfamily.

The protein localises to the golgi apparatus membrane. Functionally, probable beta-1,4-glucan synthase rather involved in the synthesis of the xyloglucan backbone than cellulose. Seems to work simultaneously with xyloglucan 6-xylosyltransferase. Xyloglucan is a noncellulosic polysaccharides of plant cell wall and consists of a glucan backbone substituted by xylose, galactose and fucose. The polypeptide is Probable xyloglucan glycosyltransferase 2 (CSLC2) (Oryza sativa subsp. indica (Rice)).